A 78-amino-acid polypeptide reads, in one-letter code: Defensin beta 136 (78 aa).

The first 21 residues, 1-21 (MNLCLSALLFFLVILLPSGKG), serve as a signal peptide directing secretion. Disulfide bonds link Cys33–Cys60, Cys40–Cys54, and Cys44–Cys61.

The protein belongs to the beta-defensin family.

Its subcellular location is the secreted. In terms of biological role, host defense peptide that exhibits antibacterial and antifungal activity. Exhibits antimicrobial activity against E.coli, S.aureus and C.albicans (in vitro). Has high lipopolysaccharide (LPS)-binding affinity, and may thereby be involved in immunoregulation through LPS neutralization. In Homo sapiens (Human), this protein is Defensin beta 136 (DEFB136).